The sequence spans 73 residues: Translation initiation factor IF-1 (73 aa).

The S1-like domain maps to M1–K73.

The protein belongs to the IF-1 family. As to quaternary structure, component of the 30S ribosomal translation pre-initiation complex which assembles on the 30S ribosome in the order IF-2 and IF-3, IF-1 and N-formylmethionyl-tRNA(fMet); mRNA recruitment can occur at any time during PIC assembly.

The protein resides in the cytoplasm. In terms of biological role, one of the essential components for the initiation of protein synthesis. Stabilizes the binding of IF-2 and IF-3 on the 30S subunit to which N-formylmethionyl-tRNA(fMet) subsequently binds. Helps modulate mRNA selection, yielding the 30S pre-initiation complex (PIC). Upon addition of the 50S ribosomal subunit IF-1, IF-2 and IF-3 are released leaving the mature 70S translation initiation complex. The polypeptide is Translation initiation factor IF-1 (Frankia alni (strain DSM 45986 / CECT 9034 / ACN14a)).